A 66-amino-acid chain; its full sequence is Conotoxin Cal6.38 (66 aa).

The N-terminal stretch at 1–22 is a signal peptide; the sequence is MKLTFVLIVAVLVLAVCNFTVA. Disulfide bonds link cysteine 38/cysteine 55, cysteine 45/cysteine 59, and cysteine 54/cysteine 64.

The protein belongs to the conotoxin O1 superfamily. In terms of tissue distribution, expressed by the venom duct.

Its subcellular location is the secreted. In terms of biological role, probable neurotoxin. This Californiconus californicus (California cone) protein is Conotoxin Cal6.38.